An 86-amino-acid chain; its full sequence is Anti-adapter protein IraP (86 aa).

A coiled-coil region spans residues 1–36 (MKNLIAELLVKLAEKEEESKELVAQVEALEIVVTAL).

This sequence belongs to the IraP family. In terms of assembly, interacts with RssB.

The protein localises to the cytoplasm. Functionally, inhibits RpoS proteolysis by regulating RssB activity, thereby increasing the stability of the sigma stress factor RpoS especially during phosphate starvation, but also in stationary phase and during nitrogen starvation. Its effect on RpoS stability is due to its interaction with RssB, which probably blocks the interaction of RssB with RpoS, and the consequent delivery of the RssB-RpoS complex to the ClpXP protein degradation pathway. The polypeptide is Anti-adapter protein IraP (Cronobacter sakazakii (strain ATCC BAA-894) (Enterobacter sakazakii)).